The chain runs to 311 residues: Probable deoxyhypusine synthase (311 aa).

Lys-284 (nucleophile) is an active-site residue.

It belongs to the deoxyhypusine synthase family. The cofactor is NAD(+).

It catalyses the reaction [eIF5A protein]-L-lysine + spermidine = [eIF5A protein]-deoxyhypusine + propane-1,3-diamine. The protein operates within protein modification; eIF5A hypusination. In terms of biological role, catalyzes the NAD-dependent oxidative cleavage of spermidine and the subsequent transfer of the butylamine moiety of spermidine to the epsilon-amino group of a specific lysine residue of the eIF-5A precursor protein to form the intermediate deoxyhypusine residue. This Sulfurisphaera tokodaii (strain DSM 16993 / JCM 10545 / NBRC 100140 / 7) (Sulfolobus tokodaii) protein is Probable deoxyhypusine synthase (dys).